The following is a 266-amino-acid chain: MTPQDYIGHHLNNLQLDLRTFSLVDPHNHTATFWTLNIDSMFFSVVLGLLFLAMFRSVAKKATSGVPGKFQTFIEMIIGFVHGSVKDMYHGKSKVIAPLALTVFVWVFLMNLMDLLPIDLLPYIGEHIFGLPALRVVPSADVNITLSMALGVFILIIFYSIKMKGVGGFVKELTMQPFNHWAFIPVNLILEGVSLLSKPVSLGLRLFGNMYAGELIFILIAGLLPWWSQWVLNVPWAIFHILIITLQAFIFMVLTIVYLSMASEEH.

A run of 5 helical transmembrane segments spans residues 33–53 (FWTL…LFLA), 95–115 (VIAP…LMDL), 141–161 (DVNI…FYSI), 206–226 (LFGN…LLPW), and 237–257 (AIFH…LTIV).

Belongs to the ATPase A chain family. As to quaternary structure, F-type ATPases have 2 components, CF(1) - the catalytic core - and CF(0) - the membrane proton channel. CF(1) has five subunits: alpha(3), beta(3), gamma(1), delta(1), epsilon(1). CF(0) has three main subunits: a(1), b(2) and c(9-12). The alpha and beta chains form an alternating ring which encloses part of the gamma chain. CF(1) is attached to CF(0) by a central stalk formed by the gamma and epsilon chains, while a peripheral stalk is formed by the delta and b chains.

It is found in the cell inner membrane. Key component of the proton channel; it plays a direct role in the translocation of protons across the membrane. In Klebsiella pneumoniae subsp. pneumoniae (strain ATCC 700721 / MGH 78578), this protein is ATP synthase subunit a.